Here is a 291-residue protein sequence, read N- to C-terminus: N-acetylmannosamine kinase (291 aa).

ATP-binding positions include 5–12 (AIDIGGTK) and 132–139 (GVGGGVVS). Residues histidine 156, cysteine 166, cysteine 168, and cysteine 173 each coordinate Zn(2+).

It belongs to the ROK (NagC/XylR) family. NanK subfamily. Homodimer.

It carries out the reaction an N-acyl-D-mannosamine + ATP = an N-acyl-D-mannosamine 6-phosphate + ADP + H(+). Its pathway is amino-sugar metabolism; N-acetylneuraminate degradation; D-fructose 6-phosphate from N-acetylneuraminate: step 2/5. Its function is as follows. Catalyzes the phosphorylation of N-acetylmannosamine (ManNAc) to ManNAc-6-P. The polypeptide is N-acetylmannosamine kinase (nanK1) (Escherichia coli O6:H1 (strain CFT073 / ATCC 700928 / UPEC)).